A 1235-amino-acid chain; its full sequence is DNA polymerase catalytic subunit (1235 aa).

Disordered stretches follow at residues 640–691 (QGRF…ETAG) and 1098–1134 (AAAPGDEPAPPAALPSPAKRPRETPSPADPPGGASKP). Over residues 650-661 (APKRPAAAREDE) the composition is skewed to basic and acidic residues. The span at 662 to 675 (ERPEEEGEDEDERE) shows a compositional bias: acidic residues. Over residues 676-691 (EGGGEREPDGARETAG) the composition is skewed to basic and acidic residues.

The protein belongs to the DNA polymerase type-B family. Forms a complex with the ssDNA-binding protein UL29, the DNA polymerase processivity factor, and the alkaline exonuclease. Interacts with the putative helicase-primase complex subunit UL8; this interaction may coordinate leading and lagging strand DNA synthesis at the replication fork.

It localises to the host nucleus. The enzyme catalyses DNA(n) + a 2'-deoxyribonucleoside 5'-triphosphate = DNA(n+1) + diphosphate. The catalysed reaction is Endonucleolytic cleavage to 5'-phosphomonoester.. Replicates viral genomic DNA. The replication complex is composed of six viral proteins: the DNA polymerase, processivity factor, primase, primase-associated factor, helicase, and ssDNA-binding protein. Additionally, the polymerase contains an intrinsic ribonuclease H (RNase H) activity that specifically degrades RNA/DNA heteroduplexes or duplex DNA substrates in the 5' to 3' direction. Therefore, it can catalyze the excision of the RNA primers that initiate the synthesis of Okazaki fragments at a replication fork during viral DNA replication. In Homo sapiens (Human), this protein is DNA polymerase catalytic subunit.